A 440-amino-acid polypeptide reads, in one-letter code: Eukaryotic translation initiation factor 3 subunit E (440 aa).

The region spanning 219–392 (VYFNYPKGRD…GQVVMGAKTT (174 aa)) is the PCI domain.

This sequence belongs to the eIF-3 subunit E family. Component of the eukaryotic translation initiation factor 3 (eIF-3) complex.

It localises to the cytoplasm. Component of the eukaryotic translation initiation factor 3 (eIF-3) complex, which is involved in protein synthesis of a specialized repertoire of mRNAs and, together with other initiation factors, stimulates binding of mRNA and methionyl-tRNAi to the 40S ribosome. The eIF-3 complex specifically targets and initiates translation of a subset of mRNAs involved in cell proliferation. The protein is Eukaryotic translation initiation factor 3 subunit E of Brugia malayi (Filarial nematode worm).